A 124-amino-acid chain; its full sequence is Ubiquinol-cytochrome-c reductase complex assembly factor 2 (124 aa).

Residues methionine 1–cysteine 13 constitute a mitochondrion transit peptide.

The protein resides in the mitochondrion matrix. Its subcellular location is the mitochondrion nucleoid. It is found in the mitochondrion. Required for the assembly of the ubiquinol-cytochrome c reductase complex (mitochondrial respiratory chain complex III or cytochrome b-c1 complex). May play a role in the modulation of respiratory chain activities such as oxygen consumption and ATP production. May be involved in cytochrome b translation and/or stability. The chain is Ubiquinol-cytochrome-c reductase complex assembly factor 2 (uqcc2) from Xenopus tropicalis (Western clawed frog).